Here is a 184-residue protein sequence, read N- to C-terminus: GTP cyclohydrolase 1 (184 aa).

Zn(2+)-binding residues include cysteine 75, histidine 78, and cysteine 146.

This sequence belongs to the GTP cyclohydrolase I family. In terms of assembly, homomer.

It carries out the reaction GTP + H2O = 7,8-dihydroneopterin 3'-triphosphate + formate + H(+). It participates in cofactor biosynthesis; 7,8-dihydroneopterin triphosphate biosynthesis; 7,8-dihydroneopterin triphosphate from GTP: step 1/1. The protein is GTP cyclohydrolase 1 of Finegoldia magna (strain ATCC 29328 / DSM 20472 / WAL 2508) (Peptostreptococcus magnus).